A 680-amino-acid chain; its full sequence is Oligopeptidase A (680 aa).

His-469 is a Zn(2+) binding site. The active site involves Glu-470. 2 residues coordinate Zn(2+): His-473 and His-476.

It belongs to the peptidase M3 family. Zn(2+) is required as a cofactor.

The catalysed reaction is Hydrolysis of oligopeptides, with broad specificity. Gly or Ala commonly occur as P1 or P1' residues, but more distant residues are also important, as is shown by the fact that Z-Gly-Pro-Gly-|-Gly-Pro-Ala is cleaved, but not Z-(Gly)(5).. Functionally, may play a specific role in the degradation of signal peptides after they are released from precursor forms of secreted proteins. Can cleave N-acetyl-L-Ala(4). The chain is Oligopeptidase A (prlC) from Salmonella typhimurium (strain LT2 / SGSC1412 / ATCC 700720).